The sequence spans 179 residues: Large ribosomal subunit protein uL5 (179 aa).

It belongs to the universal ribosomal protein uL5 family. Part of the 50S ribosomal subunit; part of the 5S rRNA/L5/L18/L25 subcomplex. Contacts the 5S rRNA and the P site tRNA. Forms a bridge to the 30S subunit in the 70S ribosome.

Its function is as follows. This is one of the proteins that bind and probably mediate the attachment of the 5S RNA into the large ribosomal subunit, where it forms part of the central protuberance. In the 70S ribosome it contacts protein S13 of the 30S subunit (bridge B1b), connecting the 2 subunits; this bridge is implicated in subunit movement. Contacts the P site tRNA; the 5S rRNA and some of its associated proteins might help stabilize positioning of ribosome-bound tRNAs. The sequence is that of Large ribosomal subunit protein uL5 from Dechloromonas aromatica (strain RCB).